The chain runs to 154 residues: Ribosome maturation factor RimP (154 aa).

Belongs to the RimP family.

The protein localises to the cytoplasm. Required for maturation of 30S ribosomal subunits. In Natranaerobius thermophilus (strain ATCC BAA-1301 / DSM 18059 / JW/NM-WN-LF), this protein is Ribosome maturation factor RimP.